The primary structure comprises 218 residues: Thiopurine S-methyltransferase (218 aa).

Residues W10, L45, E66, and R123 each coordinate S-adenosyl-L-methionine.

The protein belongs to the class I-like SAM-binding methyltransferase superfamily. TPMT family.

It is found in the cytoplasm. It carries out the reaction S-adenosyl-L-methionine + a thiopurine = S-adenosyl-L-homocysteine + a thiopurine S-methylether.. In Pseudomonas aeruginosa (strain UCBPP-PA14), this protein is Thiopurine S-methyltransferase.